The primary structure comprises 568 residues: MSHQHTVPVTVPAVVQESLKTVCSPAQTQQEQTKQPTPYPAQCQVFTDTQEKGFPKHEEKEANPVKDLPEQESEHHQQPGPQKQQLQVKKPEQELQEQELHSEKQPQEPQGLLCLGQQQQREPQEQEQHLRQHQQPQQESQGQGLCLGQQQDVLAPQELHMGQHQKEKLQEPELPLGQQQKTPEEQELILGEKQQKLHLVERHQEPQEQELHHGQKQKQQQPQEQELQLVQHQKQKQHEPELCLRKQQQQESHERELHLGKQQQQESHEPELHLGKQQHQESHEPELHLGKQQHQESCEPELHLGEQQHQEQQQHQESCEPELHLGKQQHQETQESELQLGKQQKPHEPDMVLDPKEKQKLHDPELHLGKQQHQESQESELQVEKKQHEKSPEPELHLGKQQELHEPDMTEDQKEKQSLHEPELHLGKQQESHEPDMTEDQKEKQSLYEPELHLGKQQEQQIEYEGYQRSKSLNQLLKQEKASRGQELDDSHLEQEKELLDQRLDQELVNKDEQLERKKHKLENLTQKEKQIKQLVPSTDRVQETQPIQPVKEDSLTTKKQQHSHEVQ.

Disordered regions lie at residues 23–499 and 517–568; these read CSPA…EKEL and RKKH…HEVQ. A compositionally biased stretch (low complexity) spans 25–36; the sequence is PAQTQQEQTKQP. Positions 49-77 are enriched in basic and acidic residues; sequence TQEKGFPKHEEKEANPVKDLPEQESEHHQ. A compositionally biased stretch (low complexity) spans 78–88; that stretch reads QPGPQKQQLQV. Over residues 89–106 the composition is skewed to basic and acidic residues; it reads KKPEQELQEQELHSEKQP. Low complexity-rich tracts occupy residues 107–121, 133–154, and 172–181; these read QEPQ…QQQR, HQQP…QDVL, and PELPLGQQQK. The span at 193-213 shows a compositional bias: basic and acidic residues; the sequence is KQQKLHLVERHQEPQEQELHH. The span at 217–232 shows a compositional bias: low complexity; sequence QKQQQPQEQELQLVQH. Basic and acidic residues-rich tracts occupy residues 266–333 and 345–456; these read ESHE…HQET and KPHE…HLGK. The segment covering 457 to 467 has biased composition (low complexity); the sequence is QQEQQIEYEGY. The residue at position 472 (Ser-472) is a Phosphoserine. 3 stretches are compositionally biased toward basic and acidic residues: residues 478–499, 517–532, and 551–568; these read KQEK…EKEL, RKKH…EKQI, and VKED…HEVQ.

Belongs to the involucrin family. Directly or indirectly cross-linked to cornifelin (CNFN). Post-translationally, substrate of transglutaminase. Specific glutamines or lysines are cross-linked to keratins, desmoplakin and to inter involucrin molecules. Keratinocytes of epidermis and other stratified squamous epithelia.

Its subcellular location is the cytoplasm. In terms of biological role, part of the insoluble cornified cell envelope (CE) of stratified squamous epithelia. This is Involucrin (Ivl) from Rattus norvegicus (Rat).